A 133-amino-acid chain; its full sequence is Profilin (133 aa).

It belongs to the profilin family.

More likely to influence phosphoinositide metabolism than actin assembly. The sequence is that of Profilin from Camelus.